The sequence spans 484 residues: Ribosome biogenesis protein YTM1 (484 aa).

The tract at residues 11–94 (VKVLFTTTEQ…EKTVTLQYVR (84 aa)) is ubiquitin-like (UBL) domain. 7 WD repeats span residues 121–160 (SSAG…LATS), 166–204 (GPLC…DHFS), 215–254 (GHRS…APEA), 289–329 (VHSR…VVST), 331–372 (TTSN…AATS), 378–418 (GHIN…PAAG), and 448–484 (GEGV…IISS).

The protein belongs to the WD repeat WDR12/YTM1 family. Component of the NOP7 complex, composed of ERB1, NOP7 and YTM1. The complex is held together by ERB1, which interacts with NOP7 via its N-terminal domain and with YTM1 via a high-affinity interaction between the seven-bladed beta-propeller domains of the 2 proteins. The NOP7 complex associates with the 66S pre-ribosome. Interacts (via UBL domain) with MDN1 (via VWFA/MIDAS domain).

The protein resides in the nucleus. The protein localises to the nucleolus. It localises to the nucleoplasm. Functionally, component of the NOP7 complex, which is required for maturation of the 25S and 5.8S ribosomal RNAs and formation of the 60S ribosome. The sequence is that of Ribosome biogenesis protein YTM1 from Pyricularia oryzae (strain 70-15 / ATCC MYA-4617 / FGSC 8958) (Rice blast fungus).